A 444-amino-acid chain; its full sequence is Spermidine/putrescine import ATP-binding protein PotA (444 aa).

An ABC transporter domain is found at 11–332; it reads ISLVDVDKEF…PVNKWVANFI (322 aa). An ATP-binding site is contributed by 43-50; the sequence is GPSGSGKT. The tract at residues 111-201 is insert; it reads RIKKKAEEIP…ESFKKKYLTR (91 aa).

Belongs to the ABC transporter superfamily. Spermidine/putrescine importer (TC 3.A.1.11.1) family. As to quaternary structure, the complex is composed of two ATP-binding proteins (PotA), two transmembrane proteins (PotB and PotC) and a solute-binding protein (PotD).

It is found in the cell membrane. The catalysed reaction is ATP + H2O + polyamine-[polyamine-binding protein]Side 1 = ADP + phosphate + polyamineSide 2 + [polyamine-binding protein]Side 1.. Its function is as follows. Part of the ABC transporter complex PotABCD involved in spermidine/putrescine import. Responsible for energy coupling to the transport system. This Mesomycoplasma hyopneumoniae (strain J / ATCC 25934 / NCTC 10110) (Mycoplasma hyopneumoniae) protein is Spermidine/putrescine import ATP-binding protein PotA.